Here is a 491-residue protein sequence, read N- to C-terminus: MANYFNTLNLRQQLAQLGKCRFMGRDEFADGASYLQGKKVVIVGCGAQGLNQGLNMRDSGLDISYALRKEAIAEKRASWRKATENGFKVGTYEELIPQADLVVNLTPDKQHSDVVRTVQPLMKDGAALGYSHGFNIVEVGEQIRKDITVVMVAPKCPGTEVREEYKRGFGVPTLIAVHPENDPKGEGMAIAKAWAAATGGHRAGVLESSFVAEVKSDLMGEQTILCGMLQAGSLLCFDKLVEEGTDPAYAEKLIQFGWETITEALKQGGITLMMDRLSNPAKLRAYALSEQLKEIMAPLFQKHMDDIISGEFSSGMMADWANDDKKLLTWREETGKTAFETAPQYEGKIGEQEYFDKGVLMIAMVKAGVELAFETMVDSGIIEESAYYESLHELPLIANTIARKRLYEMNVVISDTAEYGNYLFSYACVPLLKPFMAELQPGDLGKAIPEGAVDNAQLRDVNEAIRCHAIEQVGKKLRGYMTDMKRIAVAG.

The KARI N-terminal Rossmann domain maps to 15–208 (AQLGKCRFMG…GGHRAGVLES (194 aa)). NADP(+) is bound by residues 45–48 (CGAQ), Arg-68, Arg-76, Ser-78, and 108–110 (DKQ). Residue His-132 is part of the active site. Residue Gly-158 participates in NADP(+) binding. 2 consecutive KARI C-terminal knotted domains span residues 209 to 344 (SFVA…TAPQ) and 345 to 484 (YEGK…MTDM). The Mg(2+) site is built by Asp-217, Glu-221, Glu-389, and Glu-393. Ser-414 contacts substrate.

Belongs to the ketol-acid reductoisomerase family. It depends on Mg(2+) as a cofactor.

The enzyme catalyses (2R)-2,3-dihydroxy-3-methylbutanoate + NADP(+) = (2S)-2-acetolactate + NADPH + H(+). It catalyses the reaction (2R,3R)-2,3-dihydroxy-3-methylpentanoate + NADP(+) = (S)-2-ethyl-2-hydroxy-3-oxobutanoate + NADPH + H(+). Its pathway is amino-acid biosynthesis; L-isoleucine biosynthesis; L-isoleucine from 2-oxobutanoate: step 2/4. It functions in the pathway amino-acid biosynthesis; L-valine biosynthesis; L-valine from pyruvate: step 2/4. Involved in the biosynthesis of branched-chain amino acids (BCAA). Catalyzes an alkyl-migration followed by a ketol-acid reduction of (S)-2-acetolactate (S2AL) to yield (R)-2,3-dihydroxy-isovalerate. In the isomerase reaction, S2AL is rearranged via a Mg-dependent methyl migration to produce 3-hydroxy-3-methyl-2-ketobutyrate (HMKB). In the reductase reaction, this 2-ketoacid undergoes a metal-dependent reduction by NADPH to yield (R)-2,3-dihydroxy-isovalerate. The protein is Ketol-acid reductoisomerase (NADP(+)) of Escherichia coli O8 (strain IAI1).